The following is a 425-amino-acid chain: MYAAFLGLGMSVAILGPTFQDLAENVNRNISSLSLIFVGRATGFLSGTMIGGVLFDHINQFFLLGASMVATAAGLYLIPFCKTAVLLIITMSVFGASVGVVDTGANVLILDLWGDKGAPQMQALHFSFALGAFLAPLLAKLAWGTAPAQNHTESDLDTLMLNRSSNGTSDSVFAVPDDMNLLWAYASIGTFILVVSVFLFGLFCKKHSRQKKPRASAEGARRAKYHRALLCLLFLFFFFYVGAEITYGSYIFSFATTHVGMEESEAAGLNSIFWGTFAACRGLAIFFATFLQPGTMIVLSNIGSLVSCFFLVLFDKSPLCLWIATSVYGASMAATFPSGISWIEQYTTLTGKSAAFFVIGSALGDMAIPAVIGILQGHYPDLPVVLYTCLGSAIFTAILFPVMYKLATLPLKREDQKALPTSSRL.

11 helical membrane-spanning segments follow: residues 35 to 55 (LIFV…GVLF), 61 to 81 (FFLL…IPFC), 84 to 104 (AVLL…VDTG), 123 to 143 (ALHF…KLAW), 183 to 203 (WAYA…FGLF), 228 to 248 (ALLC…ITYG), 271 to 291 (SIFW…ATFL), 294 to 314 (GTMI…LVLF), 320 to 340 (CLWI…PSGI), 355 to 375 (AFFV…IGIL), and 382 to 402 (LPVV…LFPV).

It belongs to the major facilitator superfamily.

The protein localises to the apical cell membrane. May function as a sodium-dependent glucose transporter. Potential channels for urea in the inner medulla of kidney. This Mus musculus (Mouse) protein is Sodium-dependent glucose transporter 1A.